A 225-amino-acid polypeptide reads, in one-letter code: Orotate phosphoribosyltransferase (225 aa).

K31 is a binding site for 5-phospho-alpha-D-ribose 1-diphosphate. 39–40 (FF) provides a ligand contact to orotate. Residues 78-79 (YK), R105, K106, K109, H111, and 130-138 (DDVLTSGKA) contribute to the 5-phospho-alpha-D-ribose 1-diphosphate site. The orotate site is built by T134 and R163.

It belongs to the purine/pyrimidine phosphoribosyltransferase family. PyrE subfamily. Homodimer.

The catalysed reaction is orotidine 5'-phosphate + diphosphate = orotate + 5-phospho-alpha-D-ribose 1-diphosphate. It participates in pyrimidine metabolism; UMP biosynthesis via de novo pathway; UMP from orotate: step 1/2. Functionally, catalyzes the transfer of a ribosyl phosphate group from 5-phosphoribose 1-diphosphate to orotate, leading to the formation of orotidine monophosphate (OMP). This chain is Orotate phosphoribosyltransferase (URA5), found in Cryptococcus neoformans var. neoformans serotype D (strain B-3501A) (Filobasidiella neoformans).